Here is a 448-residue protein sequence, read N- to C-terminus: Bifunctional protein GlmU (448 aa).

The segment at 1-232 (MTARSSLTIV…EDEVRGINTK (232 aa)) is pyrophosphorylase. Residues 11–14 (LAAG), Lys25, Gln78, and 83–84 (GT) each bind UDP-N-acetyl-alpha-D-glucosamine. Mg(2+) is bound at residue Asp108. Residues Gly144, Glu158, Asn173, and Asn230 each contribute to the UDP-N-acetyl-alpha-D-glucosamine site. Residue Asn230 coordinates Mg(2+). Residues 233–253 (AQLAQAEAAMQARLRQAAMDA) form a linker region. Residues 254–448 (GVTLIAPETV…FRNAKLRQTK (195 aa)) form an N-acetyltransferase region. UDP-N-acetyl-alpha-D-glucosamine contacts are provided by Arg319 and Lys337. His349 (proton acceptor) is an active-site residue. UDP-N-acetyl-alpha-D-glucosamine is bound by residues Tyr352 and Asn363. Acetyl-CoA is bound by residues Ala366, 372–373 (NY), Ser409, and Arg426. A disordered region spans residues 427 to 448 (SPQTTKEGAAARFRNAKLRQTK).

In the N-terminal section; belongs to the N-acetylglucosamine-1-phosphate uridyltransferase family. The protein in the C-terminal section; belongs to the transferase hexapeptide repeat family. As to quaternary structure, homotrimer. The cofactor is Mg(2+).

The protein resides in the cytoplasm. It catalyses the reaction alpha-D-glucosamine 1-phosphate + acetyl-CoA = N-acetyl-alpha-D-glucosamine 1-phosphate + CoA + H(+). The catalysed reaction is N-acetyl-alpha-D-glucosamine 1-phosphate + UTP + H(+) = UDP-N-acetyl-alpha-D-glucosamine + diphosphate. It participates in nucleotide-sugar biosynthesis; UDP-N-acetyl-alpha-D-glucosamine biosynthesis; N-acetyl-alpha-D-glucosamine 1-phosphate from alpha-D-glucosamine 6-phosphate (route II): step 2/2. The protein operates within nucleotide-sugar biosynthesis; UDP-N-acetyl-alpha-D-glucosamine biosynthesis; UDP-N-acetyl-alpha-D-glucosamine from N-acetyl-alpha-D-glucosamine 1-phosphate: step 1/1. Its pathway is bacterial outer membrane biogenesis; LPS lipid A biosynthesis. Catalyzes the last two sequential reactions in the de novo biosynthetic pathway for UDP-N-acetylglucosamine (UDP-GlcNAc). The C-terminal domain catalyzes the transfer of acetyl group from acetyl coenzyme A to glucosamine-1-phosphate (GlcN-1-P) to produce N-acetylglucosamine-1-phosphate (GlcNAc-1-P), which is converted into UDP-GlcNAc by the transfer of uridine 5-monophosphate (from uridine 5-triphosphate), a reaction catalyzed by the N-terminal domain. The protein is Bifunctional protein GlmU of Bradyrhizobium sp. (strain ORS 278).